Consider the following 241-residue polypeptide: Pyridoxine 5'-phosphate synthase (241 aa).

Asn7 lines the 3-amino-2-oxopropyl phosphate pocket. Residue 9–10 (DH) participates in 1-deoxy-D-xylulose 5-phosphate binding. Arg18 lines the 3-amino-2-oxopropyl phosphate pocket. His43 (proton acceptor) is an active-site residue. 1-deoxy-D-xylulose 5-phosphate-binding residues include Arg45 and His50. Glu70 (proton acceptor) is an active-site residue. Position 100 (Thr100) interacts with 1-deoxy-D-xylulose 5-phosphate. His191 acts as the Proton donor in catalysis. 3-amino-2-oxopropyl phosphate-binding positions include Gly192 and 213–214 (GH).

The protein belongs to the PNP synthase family. Homooctamer; tetramer of dimers.

It is found in the cytoplasm. The catalysed reaction is 3-amino-2-oxopropyl phosphate + 1-deoxy-D-xylulose 5-phosphate = pyridoxine 5'-phosphate + phosphate + 2 H2O + H(+). It functions in the pathway cofactor biosynthesis; pyridoxine 5'-phosphate biosynthesis; pyridoxine 5'-phosphate from D-erythrose 4-phosphate: step 5/5. Functionally, catalyzes the complicated ring closure reaction between the two acyclic compounds 1-deoxy-D-xylulose-5-phosphate (DXP) and 3-amino-2-oxopropyl phosphate (1-amino-acetone-3-phosphate or AAP) to form pyridoxine 5'-phosphate (PNP) and inorganic phosphate. In Nostoc punctiforme (strain ATCC 29133 / PCC 73102), this protein is Pyridoxine 5'-phosphate synthase.